Consider the following 147-residue polypeptide: 6-pyruvoyl tetrahydrobiopterin synthase (147 aa).

Position 26 (histidine 26) interacts with Zn(2+). The active-site Proton acceptor is the cysteine 45. 2 residues coordinate Zn(2+): histidine 51 and histidine 53. Residues histidine 92 and glutamate 136 each act as charge relay system in the active site.

Belongs to the PTPS family. Homohexamer formed of two homotrimers in a head to head fashion. Zn(2+) is required as a cofactor.

The catalysed reaction is 7,8-dihydroneopterin 3'-triphosphate = 6-pyruvoyl-5,6,7,8-tetrahydropterin + triphosphate + H(+). It participates in cofactor biosynthesis; tetrahydrobiopterin biosynthesis; tetrahydrobiopterin from 7,8-dihydroneopterin triphosphate: step 1/3. In terms of biological role, involved in the biosynthesis of tetrahydrobiopterin, an essential cofactor of aromatic amino acid hydroxylases. Catalyzes the transformation of 7,8-dihydroneopterin triphosphate into 6-pyruvoyl tetrahydropterin. This is 6-pyruvoyl tetrahydrobiopterin synthase (pts) from Poecilia reticulata (Guppy).